The following is a 1088-amino-acid chain: Methionine S-methyltransferase (1088 aa).

The protein belongs to the class I-like SAM-binding methyltransferase superfamily. In terms of assembly, homotetramer. Expressed in the shoot, scutellum, and aleurone cells but not in the root or endosperm.

The protein localises to the cytoplasm. The enzyme catalyses L-methionine + S-adenosyl-L-methionine = S-methyl-L-methionine + S-adenosyl-L-homocysteine. Functionally, catalyzes the S-methylmethionine (SMM) biosynthesis from adenosyl-L-homocysteine (AdoMet) and methionine. SMM biosynthesis (by MMT1) and degradation (by HMT-1, HMT-2 and HMT-3) constitute the SMM cycle in plants, which is probably required to achieve short term control of AdoMet level. Also able to catalyze the selenium-methylmethionine (SeMM) from AdoMet and selenium-methionine (SeMet). May play a role in phoem sulfur transport; such function is however not essential. The chain is Methionine S-methyltransferase (MMT1) from Hordeum vulgare (Barley).